Consider the following 517-residue polypeptide: Protein ERGIC-53 (517 aa).

Positions 1-30 (MAVSRRRVPQAGARSFFCALLLSFSQFTGS) are cleaved as a signal peptide. Over 31-484 (DGTGGDAAAP…DLPPFPSCLS (454 aa)) the chain is Lumenal. The L-type lectin-like domain occupies 52–275 (RRFEYKYSFK…DVLSFLTFQL (224 aa)). A carbohydrate-binding residues include serine 96 and aspartate 129. Residues aspartate 160, phenylalanine 162, and asparagine 164 each contribute to the Ca(2+) site. Residues asparagine 164 and histidine 186 each contribute to the a carbohydrate site. Ca(2+) is bound at residue aspartate 189. Cysteine 198 and cysteine 238 are oxidised to a cystine. 259 to 261 (GGL) lines the a carbohydrate pocket. Serine 433 carries the post-translational modification Phosphoserine. The chain crosses the membrane as a helical span at residues 485-505 (TIHFVIFVVVQTVLFVGYIMY). At 506–517 (RTQQEAAAKKFF) the chain is on the cytoplasmic side. The segment at 506–517 (RTQQEAAAKKFF) is mediates interaction with RAB3GAP1, RAB3GAP2 and UBXN6. Residues 516-517 (FF) carry the ER export motif motif.

In terms of assembly, exists both as a covalent disulfide-linked homohexamer, and a complex of three disulfide-linked dimers non-covalently kept together. Interacts with MCFD2. May interact with TMEM115. Interacts with RAB3GAP1 and RAB3GAP2. Interacts with UBXN6. Interacts with SERPINA1/alpha1-antitrypsin. Interacts with BET1.

The protein localises to the endoplasmic reticulum-Golgi intermediate compartment membrane. It is found in the golgi apparatus membrane. The protein resides in the endoplasmic reticulum membrane. Its function is as follows. Mannose-specific lectin. May recognize sugar residues of glycoproteins, glycolipids, or glycosylphosphatidyl inositol anchors and may be involved in the sorting or recycling of proteins, lipids, or both. The LMAN1-MCFD2 complex forms a specific cargo receptor for the ER-to-Golgi transport of selected proteins. This is Protein ERGIC-53 (Lman1) from Mus musculus (Mouse).